Reading from the N-terminus, the 230-residue chain is Gilatoxin (230 aa).

In terms of domain architecture, Peptidase S1 spans 1–230; that stretch reads IIGGQECDET…ISFLFWIQSI (230 aa). Intrachain disulfides connect Cys7–Cys146, Cys26–Cys42, Cys125–Cys193, Cys157–Cys172, and Cys183–Cys208. The Charge relay system role is filled by His41. A glycan (N-linked (GlcNAc...) asparagine) is linked at Asn84. Asp93 acts as the Charge relay system in catalysis. The active-site Charge relay system is the Ser187.

Belongs to the peptidase S1 family. Extensively glycosylated, contains approximately 8 mol of monosaccharide per mol of toxin. As to expression, expressed by the mandibular venom gland.

It localises to the secreted. In terms of biological role, has kallikrein-like activity, releases bradykinin from kininogen. Catalyzes the hydrolysis of various arginine ester substrates for trypsin and thrombin and degrades both angiotensin I and II by cleavage of the dipeptide Asp-Arg from the NH2-terminal end. Fibrinogen is also degraded but a fibrin clot is not produced. May have a potentiating effect on potent hemorrhagic toxins present in the venom. The protein is Gilatoxin of Heloderma horridum horridum (Mexican beaded lizard).